The sequence spans 326 residues: Isopenicillin N synthase (326 aa).

3 residues coordinate isopenicillin N: Arg84, Tyr88, and Tyr186. N-[(5S)-5-amino-5-carboxypentanoyl]-L-cysteinyl-D-valine is bound by residues Arg84, Tyr88, Tyr186, His209, and Asp211. Residues 183 to 283 (LIRYPFLENY…RLSIPFFANL (101 aa)) enclose the Fe2OG dioxygenase domain. Fe(2+) contacts are provided by His209, Asp211, and His265. Arg274 is a binding site for 2-oxoglutarate. Ser276 is an isopenicillin N binding site. An N-[(5S)-5-amino-5-carboxypentanoyl]-L-cysteinyl-D-valine-binding site is contributed by Ser276.

It belongs to the iron/ascorbate-dependent oxidoreductase family. The cofactor is Fe cation. Requires L-ascorbate as cofactor.

It catalyses the reaction N-[(5S)-5-amino-5-carboxypentanoyl]-L-cysteinyl-D-valine + O2 = isopenicillin N + 2 H2O. It functions in the pathway antibiotic biosynthesis; penicillin G biosynthesis; penicillin G from L-alpha-aminoadipate and L-cysteine and L-valine: step 2/3. In terms of biological role, removes, in the presence of oxygen, 4 hydrogen atoms from delta-L-(alpha-aminoadipyl)-L-cysteinyl-D-valine (ACV) to form the azetidinone and thiazolidine rings of isopenicillin. This chain is Isopenicillin N synthase (pcbC), found in Flavobacterium sp. (strain SC 12,154).